The primary structure comprises 224 residues: N-(5'-phosphoribosyl)anthranilate isomerase (224 aa).

The protein belongs to the TrpF family.

The catalysed reaction is N-(5-phospho-beta-D-ribosyl)anthranilate = 1-(2-carboxyphenylamino)-1-deoxy-D-ribulose 5-phosphate. Its pathway is amino-acid biosynthesis; L-tryptophan biosynthesis; L-tryptophan from chorismate: step 3/5. In Sinorhizobium fredii (strain NBRC 101917 / NGR234), this protein is N-(5'-phosphoribosyl)anthranilate isomerase.